We begin with the raw amino-acid sequence, 415 residues long: PRKCA-binding protein (415 aa).

A PDZ domain is found at 22 to 105 (KVTLQKDAQN…EVTIHYNKLQ (84 aa)). Zn(2+)-binding residues include C44 and C46. T82 is modified (phosphothreonine). Residues 144-357 (LCNDGLVKRL…CYAVLRDADV (214 aa)) form the AH domain. The tract at residues 376–415 (EEFTDGEEEEEEEDTAAGEPSRDTRGAAGPLDKGGSWCDS) is disordered. Acidic residues predominate over residues 377-391 (EFTDGEEEEEEEDTA). Residue C413 is the site of S-palmitoyl cysteine; by DHHC8 attachment.

Monomer and homodimer. Interacts with CXADR. Interacts presynaptically with the glutamate receptors GRIA2, GRIA3, GRIK3, isoform 3 of GRIA4, isoform A of GRM4, GRM7 and GRM8; with NAPA and NAPB; and with BTG2. The interaction with NAPA and NAPB disrupts the interaction with GRIA2, conducting to the internalization of GRIA2. Interacts with PRKCA; with the amine transporters SLC6A2 and SLC6A3; with the channels ASIC1 and ASIC2; with the GTP-binding proteins ARF1 and ARF3; with the ephrin receptor tyrosine kinases EPHA7, EPHB1 and EPHB2; with ERBB2 and through its PDZ domain with the C-terminal tail of PRLHR. Interacts with UNC5A. Interacts (via AH domain) with NCS1/FREQ; in a calcium-dependent manner. Interacts with F-actin and associates with the ARP2/3 complex. Interacts (via PDZ domain) with ARF1 (activated); the interaction blocks Arp2/3 complex inhibition. Interacts with SORCS3. Phosphorylation at Thr-82 appears to inhibit the interaction with AMPA receptors. Post-translationally, palmitoylation on Cys-413 is essential for long-term synaptic depression (LTD).

The protein resides in the cytoplasm. It localises to the perinuclear region. It is found in the membrane. Its subcellular location is the postsynaptic density. The protein localises to the synapse. The protein resides in the synaptosome. It localises to the cytoskeleton. Probable adapter protein that bind to and organize the subcellular localization of a variety of membrane proteins containing some PDZ recognition sequence. Involved in the clustering of various receptors, possibly by acting at the receptor internalization level. Plays a role in synaptic plasticity by regulating the trafficking and internalization of AMPA receptors. May be regulated upon PRKCA activation. May regulate ASIC1/ASIC3 channel. Regulates actin polymerization by inhibiting the actin-nucleating activity of the Arp2/3 complex; the function is competitive with nucleation promoting factors and is linked to neuronal morphology regulation and AMPA receptor (AMPAR) endocytosis. Via interaction with the Arp2/3 complex involved in regulation of synaptic plasicity of excitatory synapses and required for spine shrinkage during long-term depression (LTD). Involved in regulation of astrocyte morphology, antagonistic to Arp2/3 complex activator WASL/N-WASP function. This chain is PRKCA-binding protein (PICK1), found in Macaca fascicularis (Crab-eating macaque).